Consider the following 341-residue polypeptide: Glucokinase (341 aa).

18-23 (GDIGGT) serves as a coordination point for ATP.

Belongs to the bacterial glucokinase family.

The protein localises to the cytoplasm. The catalysed reaction is D-glucose + ATP = D-glucose 6-phosphate + ADP + H(+). The protein is Glucokinase of Rhizobium etli (strain CIAT 652).